The sequence spans 129 residues: Small ribosomal subunit protein uS11 (129 aa).

Belongs to the universal ribosomal protein uS11 family. As to quaternary structure, part of the 30S ribosomal subunit. Interacts with proteins S7 and S18. Binds to IF-3.

In terms of biological role, located on the platform of the 30S subunit, it bridges several disparate RNA helices of the 16S rRNA. Forms part of the Shine-Dalgarno cleft in the 70S ribosome. The sequence is that of Small ribosomal subunit protein uS11 from Nitratidesulfovibrio vulgaris (strain ATCC 29579 / DSM 644 / CCUG 34227 / NCIMB 8303 / VKM B-1760 / Hildenborough) (Desulfovibrio vulgaris).